Consider the following 465-residue polypeptide: Argininosuccinate lyase (465 aa).

Belongs to the lyase 1 family. Argininosuccinate lyase subfamily.

It is found in the cytoplasm. The catalysed reaction is 2-(N(omega)-L-arginino)succinate = fumarate + L-arginine. Its pathway is amino-acid biosynthesis; L-arginine biosynthesis; L-arginine from L-ornithine and carbamoyl phosphate: step 3/3. In Rhodopseudomonas palustris (strain BisB5), this protein is Argininosuccinate lyase.